The primary structure comprises 84 residues: Small ribosomal subunit protein uS17 (84 aa).

It belongs to the universal ribosomal protein uS17 family. In terms of assembly, part of the 30S ribosomal subunit.

Its function is as follows. One of the primary rRNA binding proteins, it binds specifically to the 5'-end of 16S ribosomal RNA. This Yersinia enterocolitica serotype O:8 / biotype 1B (strain NCTC 13174 / 8081) protein is Small ribosomal subunit protein uS17.